The primary structure comprises 406 residues: Tyrosine--tRNA ligase (406 aa).

Tyrosine 35 serves as a coordination point for L-tyrosine. Residues 40-49 (PTADSLHVGH) carry the 'HIGH' region motif. L-tyrosine-binding residues include tyrosine 168 and glutamine 172. The 'KMSKS' region signature appears at 228-232 (KMGKT). An ATP-binding site is contributed by lysine 231. The S4 RNA-binding domain maps to 340–404 (SELLDILVEA…RGKKNYNKIV (65 aa)).

This sequence belongs to the class-I aminoacyl-tRNA synthetase family. TyrS type 1 subfamily. As to quaternary structure, homodimer.

It localises to the cytoplasm. It carries out the reaction tRNA(Tyr) + L-tyrosine + ATP = L-tyrosyl-tRNA(Tyr) + AMP + diphosphate + H(+). In terms of biological role, catalyzes the attachment of tyrosine to tRNA(Tyr) in a two-step reaction: tyrosine is first activated by ATP to form Tyr-AMP and then transferred to the acceptor end of tRNA(Tyr). This chain is Tyrosine--tRNA ligase, found in Clostridium perfringens (strain ATCC 13124 / DSM 756 / JCM 1290 / NCIMB 6125 / NCTC 8237 / Type A).